The following is a 455-amino-acid chain: Bifunctional protein GlmU (455 aa).

Positions 1–227 (MGLSVIILAA…CEEVQGVNDR (227 aa)) are pyrophosphorylase. UDP-N-acetyl-alpha-D-glucosamine contacts are provided by residues 8–11 (LAAG), Lys-22, Gln-73, 78–79 (GT), 100–102 (YGD), Gly-137, Glu-152, Asn-167, and Asn-225. Residue Asp-102 participates in Mg(2+) binding. Residue Asn-225 coordinates Mg(2+). Residues 228-248 (WELTKLERYYQRLMAKKLSLA) are linker. The segment at 249–455 (GVTIIDPERF…KGWHRPTKKE (207 aa)) is N-acetyltransferase. Positions 332 and 350 each coordinate UDP-N-acetyl-alpha-D-glucosamine. The Proton acceptor role is filled by His-362. Residues Tyr-365 and Asn-376 each coordinate UDP-N-acetyl-alpha-D-glucosamine. Acetyl-CoA is bound by residues Ala-379, 385–386 (NY), Ser-404, Ala-422, and Arg-439.

In the N-terminal section; belongs to the N-acetylglucosamine-1-phosphate uridyltransferase family. The protein in the C-terminal section; belongs to the transferase hexapeptide repeat family. As to quaternary structure, homotrimer. Requires Mg(2+) as cofactor.

The protein localises to the cytoplasm. The catalysed reaction is alpha-D-glucosamine 1-phosphate + acetyl-CoA = N-acetyl-alpha-D-glucosamine 1-phosphate + CoA + H(+). It carries out the reaction N-acetyl-alpha-D-glucosamine 1-phosphate + UTP + H(+) = UDP-N-acetyl-alpha-D-glucosamine + diphosphate. The protein operates within nucleotide-sugar biosynthesis; UDP-N-acetyl-alpha-D-glucosamine biosynthesis; N-acetyl-alpha-D-glucosamine 1-phosphate from alpha-D-glucosamine 6-phosphate (route II): step 2/2. It participates in nucleotide-sugar biosynthesis; UDP-N-acetyl-alpha-D-glucosamine biosynthesis; UDP-N-acetyl-alpha-D-glucosamine from N-acetyl-alpha-D-glucosamine 1-phosphate: step 1/1. It functions in the pathway bacterial outer membrane biogenesis; LPS lipid A biosynthesis. In terms of biological role, catalyzes the last two sequential reactions in the de novo biosynthetic pathway for UDP-N-acetylglucosamine (UDP-GlcNAc). The C-terminal domain catalyzes the transfer of acetyl group from acetyl coenzyme A to glucosamine-1-phosphate (GlcN-1-P) to produce N-acetylglucosamine-1-phosphate (GlcNAc-1-P), which is converted into UDP-GlcNAc by the transfer of uridine 5-monophosphate (from uridine 5-triphosphate), a reaction catalyzed by the N-terminal domain. This Coxiella burnetii (strain CbuG_Q212) (Coxiella burnetii (strain Q212)) protein is Bifunctional protein GlmU.